The chain runs to 348 residues: Probable malate dehydrogenase 2, mitochondrial (348 aa).

The N-terminal 9 residues, 1-9 (MNKILTRSF), are a transit peptide targeting the mitochondrion. An NAD(+)-binding site is contributed by 31–37 (GASGQIG). Substrate contacts are provided by arginine 112 and arginine 118. NAD(+) is bound by residues asparagine 125, glutamine 132, and 150–152 (VGN). Substrate is bound by residues asparagine 152 and arginine 183. Residue histidine 208 is the Proton acceptor of the active site.

This sequence belongs to the LDH/MDH superfamily. MDH type 2 family. In terms of assembly, homodimer.

The protein resides in the mitochondrion. The enzyme catalyses (S)-malate + NAD(+) = oxaloacetate + NADH + H(+). Its function is as follows. Catalyzes the reversible oxidation of malate to oxaloacetate. The chain is Probable malate dehydrogenase 2, mitochondrial (mdhB) from Dictyostelium discoideum (Social amoeba).